The primary structure comprises 163 residues: Nucleotide-binding protein Cj0374 (163 aa).

Belongs to the YajQ family.

Functionally, nucleotide-binding protein. The sequence is that of Nucleotide-binding protein Cj0374 from Campylobacter jejuni subsp. jejuni serotype O:2 (strain ATCC 700819 / NCTC 11168).